The chain runs to 502 residues: MSQKKIIIIGGGLGGISAAIRLAQSGFDVSLYDKNNHIGGKVNRLETEGFGFDLGPSILTMPYIFENLFNYSDKQMKDYVTIERLPLQWRSFFTNGEVIDLYEDLSQMLNANTYLTNDDIQQLHQFLNYAEKIHRFTEKGYFALGLDKVSEIIKYQGLLRSLKGVDYFSTMQQAINRYIEKQKLRDMLGYFIKYVGSSSYDAPAVLTLLIHMQYEQGLWYVKGGIHKLAQALEQLAIEEGVAIHTGMDVCSIDTYFNHITGVRLDDGSHVSADYIVSNREVIPTYRDLLHFSNKKIAQLEKVYEPAASGYVMHLGVDKEYAQLAHHNFLFSNDSKRNYREVFHDKVLPQDPTIYLVNSNKSDPTQAPEGHENLKVLPHIPYIQNQPFTEEQYSDFRERVLDKLEKMGLTDLRQHIIYEDIWTPHDIERTYGSNKGAIYGVVADKKKNKGFKFPKQSEYFDNLFFVGGSVNPGGGMPMVTLSGQQVADKINALECKVTTDSRE.

8–20 is an FAD binding site; that stretch reads IIGGGLGGISAAI.

It belongs to the carotenoid/retinoid oxidoreductase family. CrtP subfamily. FAD is required as a cofactor.

The enzyme catalyses all-trans-4,4'-diaponeurosporene + 2 AH2 + 2 O2 = 4,4'-diaponeurosporenal + 2 A + 3 H2O. It participates in carotenoid biosynthesis; staphyloxanthin biosynthesis; staphyloxanthin from farnesyl diphosphate: step 3/5. Involved in the biosynthesis of the yellow-orange carotenoid staphyloxanthin, which plays a role in the virulence via its protective function against oxidative stress. Catalyzes the oxidation of the terminal methyl side group of 4,4'-diaponeurosporene to form 4,4'-diaponeurosporen-4-al. This Staphylococcus haemolyticus (strain JCSC1435) protein is 4,4'-diaponeurosporene oxygenase.